The chain runs to 153 residues: Arginine repressor (153 aa).

It belongs to the ArgR family.

It is found in the cytoplasm. The protein operates within amino-acid biosynthesis; L-arginine biosynthesis [regulation]. Its function is as follows. Regulates arginine biosynthesis genes. The polypeptide is Arginine repressor (Glaesserella parasuis serovar 5 (strain SH0165) (Haemophilus parasuis)).